A 327-amino-acid polypeptide reads, in one-letter code: Beta-ketoacyl-[acyl-carrier-protein] synthase III (327 aa).

Active-site residues include Cys112 and His253. Residues Gln254 to Arg258 are ACP-binding. Residue Asn283 is part of the active site.

Belongs to the thiolase-like superfamily. FabH family. Homodimer.

The protein resides in the cytoplasm. The catalysed reaction is malonyl-[ACP] + acetyl-CoA + H(+) = 3-oxobutanoyl-[ACP] + CO2 + CoA. Its pathway is lipid metabolism; fatty acid biosynthesis. Functionally, catalyzes the condensation reaction of fatty acid synthesis by the addition to an acyl acceptor of two carbons from malonyl-ACP. Catalyzes the first condensation reaction which initiates fatty acid synthesis and may therefore play a role in governing the total rate of fatty acid production. Possesses both acetoacetyl-ACP synthase and acetyl transacylase activities. Its substrate specificity determines the biosynthesis of branched-chain and/or straight-chain of fatty acids. In Chlamydia trachomatis serovar A (strain ATCC VR-571B / DSM 19440 / HAR-13), this protein is Beta-ketoacyl-[acyl-carrier-protein] synthase III.